The chain runs to 313 residues: Ribosomal RNA small subunit methyltransferase H (313 aa).

Residues 51–53 (GGH), aspartate 71, phenylalanine 98, aspartate 119, and glutamine 126 each bind S-adenosyl-L-methionine. The segment at 293–313 (EEQRANPRSRSARLRVAERVS) is disordered.

The protein belongs to the methyltransferase superfamily. RsmH family.

Its subcellular location is the cytoplasm. It carries out the reaction cytidine(1402) in 16S rRNA + S-adenosyl-L-methionine = N(4)-methylcytidine(1402) in 16S rRNA + S-adenosyl-L-homocysteine + H(+). Specifically methylates the N4 position of cytidine in position 1402 (C1402) of 16S rRNA. The protein is Ribosomal RNA small subunit methyltransferase H of Roseiflexus sp. (strain RS-1).